Consider the following 130-residue polypeptide: Cystatin domain-containing protein 1 (130 aa).

The first 23 residues, 1–23 (MSWKVPMLVGLVVLGTHIWTINK), serve as a signal peptide directing secretion. The 80-residue stretch at 37 to 116 (ASVEFAVAQF…CVFQVDARPW (80 aa)) folds into the Cystatin domain. Disulfide bonds link cysteine 84–cysteine 94 and cysteine 107–cysteine 127.

The protein belongs to the cystatin family.

It is found in the secreted. Its function is as follows. May play a specialized role in spermatogenesis. The protein is Cystatin domain-containing protein 1 of Rattus norvegicus (Rat).